Consider the following 1930-residue polypeptide: Ankyrin repeat domain-containing protein SAT10 (1930 aa).

ANK repeat units follow at residues 840–872 (FRHTPLGVATAYGDADVIDLLINHDISWWDLEE), 878–908 (GTWNALHHAALGGQRNIMCKLLLQQRKGVLN), 920–949 (SGNTPLILAASRGFHKIVALLLEDGSMRGY), 959–989 (QRSSALLAAARYGFSQTLEMLLTYEGIDYSK), 993–1023 (NGASILHLALVNDREAAALQILAHKDIFSNE), 1073–1102 (SGLTSLTIAIWRNLKSIVEILIAMDADANG), 1106–1135 (EFEAPLVAAAEVGSFELFTMFTKIGATKTE), 1144–1174 (GRTRPLHAACAMGHLEVVRELLKDSVTQLSH), 1178–1205 (NQRTPLCAAISRDQNHVISVLLDRETET), 1206–1235 (GLQEGLWEAARSGKAHILDQLLRRGAEINA), 1239–1268 (YGNTALQWASYYNKPRCVERLLLGGARLDL), 1272–1301 (DNVNALGDAARSGSAEPLKLLVDVGVDVNA), 1304–1333 (GGDTALCRAIWAEEVECVSVLLQGGAKFIL), 1339–1368 (RFENLLTFAVQVSSPEILRLLLKAPEERDL), 1400–1429 (SGWTILHLAAVHGTLAGLTKVLDHATGRAA), 1514–1543 (QNMLASAWMDTERSLKLLGILLEAGVSLTP), 1548–1577 (RHGTALHTAALFSPKPLVEKVIETSRMLAD), 1615–1644 (MGRNAVHLAAAAGARSVLEKIFEVEENEDL), 1651–1680 (DGWTPFHWACRGEDDDCARFLIEKARKIFD), and 1696–1724 (KTWTPLDVARFHQRREVELLLSLGMTTSD).

It functions in the pathway mycotoxin biosynthesis. In terms of biological role, ankyrin repeat domain-containing protein; part of the satratoxin SC1 cluster involved in the biosynthesis of satratoxins, trichothecene mycotoxins that are associated with human food poisonings. Satratoxins are suggested to be made by products of multiple gene clusters (SC1, SC2 and SC3) that encode 21 proteins in all, including polyketide synthases, acetyltransferases, and other enzymes expected to modify the trichothecene skeleton. SC1 encodes 10 proteins, SAT1 to SAT10. The largest are SAT8, which encodes a putative polyketide synthase (PKS) with a conventional non-reducing architecture, and SAT10, a putative protein containing four ankyrin repeats and thus may be involved in protein scaffolding. The putative short-chain reductase SAT3 may assist the PKS in some capacity. SAT6 contains a secretory lipase domain and acts probably as a trichothecene esterase. SAT5 encodes a putative acetyltransferase, and so, with SAT6, may affect endogenous protection from toxicity. The probable transcription factor SAT9 may regulate the expression of the SC1 cluster. SC2 encodes proteins SAT11 to SAT16, the largest of which encodes the putative reducing PKS SAT13. SAT11 is a cytochrome P450 monooxygenase, while SAT14 and SAT16 are probable acetyltransferases. The SC2 cluster may be regulated by the transcription factor SAT15. SC3 is a small cluster that encodes 5 proteins, SAT17 to SAT21. SAT21 is a putative MFS-type transporter which may have a role in exporting secondary metabolites. The four other proteins putatively encoded in SC3 include the taurine hydroxylase-like protein SAT17, the O-methyltransferase SAT18, the acetyltransferase SAT19, and the Cys6-type zinc finger SAT20, the latter being probably involved in regulation of SC3 expression. The protein is Ankyrin repeat domain-containing protein SAT10 of Stachybotrys chartarum (strain CBS 109288 / IBT 7711) (Toxic black mold).